The sequence spans 544 residues: Chaperonin GroEL 2 (544 aa).

Residues 29 to 32 (TLGP), 86 to 90 (DGTTT), glycine 413, 482 to 484 (NVL), and aspartate 498 each bind ATP.

The protein belongs to the chaperonin (HSP60) family. In terms of assembly, forms a cylinder of 14 subunits composed of two heptameric rings stacked back-to-back. Interacts with the co-chaperonin GroES.

The protein localises to the cytoplasm. It carries out the reaction ATP + H2O + a folded polypeptide = ADP + phosphate + an unfolded polypeptide.. Together with its co-chaperonin GroES, plays an essential role in assisting protein folding. The GroEL-GroES system forms a nano-cage that allows encapsulation of the non-native substrate proteins and provides a physical environment optimized to promote and accelerate protein folding. The polypeptide is Chaperonin GroEL 2 (Roseiflexus sp. (strain RS-1)).